Consider the following 433-residue polypeptide: Histone deacetylase RPD3 (433 aa).

Residues 19–331 (RRVAYFYDAD…WCFETGLLNN (313 aa)) form a histone deacetylase region. The active site involves His-151. An ESA1-RPD3 motif motif is present at residues 320–340 (RTWCFETGLLNNVVLDKDLPY). The interval 388–433 (SVQLNHTPRDAEDLGDVEEDSAEAKDTKGGSQYARDLHVEHDNEFY) is disordered. Thr-394 is subject to Phosphothreonine. Residue Ser-408 is modified to Phosphoserine. The segment covering 422 to 433 (RDLHVEHDNEFY) has biased composition (basic and acidic residues).

Belongs to the histone deacetylase family. HD type 1 subfamily. Component of the RPD3C(L) complex composed of at least ASH1, CTI6, DEP1, PHO23, RPD3, RXT2, RXT3, SAP30, SDS3, SIN3, UME1 and UME6. Component of the RPD3C(S) complex composed of at least EAF3, RCO1, RPD3, SIN3, and UME1. Interacts with cyclophilins CPR1, CPR6 and CPR7, with the kinase HOG1, and with ESS1, CYC8 and HAC1.

The protein resides in the cytoplasm. It localises to the nucleus. The enzyme catalyses N(6)-acetyl-L-lysyl-[histone] + H2O = L-lysyl-[histone] + acetate. Its function is as follows. Catalytic component of the RPD3 histone deacetylase (HDAC) complexes RPD3C(L) and RPD3C(S) responsible for the deacetylation of lysine residues on the N-terminal part of the core histones (H2A, H2B, H3 and H4). Histone deacetylation plays an important role in transcriptional regulation, cell cycle progression, DNA damage response, osmotic stress response and developmental events. Is involved in rDNA and telomere silencing and in double strand breaks repair. Required for both full transcription repression and activation of many genes including cell type-specific genes (STE6, TY2 and HO), cell differentiation-specific genes (SPO13), genes that respond to external signals (PHO5) and TRK2. The RPD3 complexes regulate also chromosomal replication timing. This chain is Histone deacetylase RPD3 (RPD3), found in Saccharomyces cerevisiae (strain ATCC 204508 / S288c) (Baker's yeast).